The primary structure comprises 873 residues: Rho GTPase-activating protein gacJJ (873 aa).

Residues aspartate 64 to threonine 147 are disordered. Over residues proline 66–serine 91 the composition is skewed to low complexity. A compositionally biased stretch (gly residues) spans isoleucine 103 to asparagine 112. Over residues glycine 113–asparagine 144 the composition is skewed to low complexity. Residues asparagine 301 to serine 402 form the PH domain. Positions valine 428 to phenylalanine 621 constitute a Rho-GAP domain. Residues glutamate 628–histidine 694 enclose the SH3 domain. Positions methionine 715 to threonine 761 form a coiled coil.

The protein resides in the cytoplasm. In terms of biological role, rho GTPase-activating protein involved in the signal transduction pathway. In Dictyostelium discoideum (Social amoeba), this protein is Rho GTPase-activating protein gacJJ (gacJJ).